The chain runs to 155 residues: Small ribosomal subunit protein uS7cz/uS7cy (155 aa).

Belongs to the universal ribosomal protein uS7 family. In terms of assembly, part of the 30S ribosomal subunit.

The protein localises to the plastid. Its function is as follows. One of the primary rRNA binding proteins, it binds directly to 16S rRNA where it nucleates assembly of the head domain of the 30S subunit. This chain is Small ribosomal subunit protein uS7cz/uS7cy (rps7-A), found in Epifagus virginiana (Beechdrops).